The primary structure comprises 94 residues: uncharacterized protein (94 aa).

Specifically expressed in retina and retinal pigment epithelium.

This is an uncharacterized protein from Homo sapiens (Human).